A 185-amino-acid chain; its full sequence is uncharacterized protein (185 aa).

Helical transmembrane passes span 32-52 (LIFV…LLAF), 66-86 (LVTL…VLAV), and 155-175 (IGYG…FLVV).

It is found in the cell membrane. This is an uncharacterized protein from Bacillus subtilis (strain 168).